A 129-amino-acid chain; its full sequence is Iron-sulfur cluster assembly 1 homolog, mitochondrial (129 aa).

A mitochondrion-targeting transit peptide spans 1–12; it reads MSASLVRATVRA. Fe cation contacts are provided by cysteine 57, cysteine 121, and cysteine 123.

This sequence belongs to the HesB/IscA family. In terms of assembly, interacts with CRY2, but not with CRY1 (in vitro).

The protein localises to the mitochondrion. Functionally, involved in the maturation of mitochondrial 4Fe-4S proteins functioning late in the iron-sulfur cluster assembly pathway. Probably involved in the binding of an intermediate of Fe/S cluster assembly. The polypeptide is Iron-sulfur cluster assembly 1 homolog, mitochondrial (ISCA1) (Bos taurus (Bovine)).